The following is a 120-amino-acid chain: Large ribosomal subunit protein uL18 (120 aa).

Belongs to the universal ribosomal protein uL18 family. Part of the 50S ribosomal subunit; part of the 5S rRNA/L5/L18/L25 subcomplex. Contacts the 5S and 23S rRNAs.

In terms of biological role, this is one of the proteins that bind and probably mediate the attachment of the 5S RNA into the large ribosomal subunit, where it forms part of the central protuberance. The protein is Large ribosomal subunit protein uL18 of Staphylococcus carnosus (strain TM300).